We begin with the raw amino-acid sequence, 163 residues long: ATP synthase subunit b 1 (163 aa).

The helical transmembrane segment at 7–27 threads the bilayer; that stretch reads AETWVAIAFVILMGIFAYLGV.

Belongs to the ATPase B chain family. F-type ATPases have 2 components, F(1) - the catalytic core - and F(0) - the membrane proton channel. F(1) has five subunits: alpha(3), beta(3), gamma(1), delta(1), epsilon(1). F(0) has three main subunits: a(1), b(2) and c(10-14). The alpha and beta chains form an alternating ring which encloses part of the gamma chain. F(1) is attached to F(0) by a central stalk formed by the gamma and epsilon chains, while a peripheral stalk is formed by the delta and b chains.

It is found in the cell inner membrane. Its function is as follows. F(1)F(0) ATP synthase produces ATP from ADP in the presence of a proton or sodium gradient. F-type ATPases consist of two structural domains, F(1) containing the extramembraneous catalytic core and F(0) containing the membrane proton channel, linked together by a central stalk and a peripheral stalk. During catalysis, ATP synthesis in the catalytic domain of F(1) is coupled via a rotary mechanism of the central stalk subunits to proton translocation. In terms of biological role, component of the F(0) channel, it forms part of the peripheral stalk, linking F(1) to F(0). This Rhodopseudomonas palustris (strain HaA2) protein is ATP synthase subunit b 1.